Reading from the N-terminus, the 143-residue chain is Large ribosomal subunit protein uL15 (143 aa).

2 stretches are compositionally biased toward basic residues: residues methionine 1 to glycine 13 and lysine 23 to glycine 38. The disordered stretch occupies residues methionine 1–glycine 38.

Belongs to the universal ribosomal protein uL15 family. As to quaternary structure, part of the 50S ribosomal subunit.

In terms of biological role, binds to the 23S rRNA. This Methanococcus maripaludis (strain C5 / ATCC BAA-1333) protein is Large ribosomal subunit protein uL15.